The sequence spans 512 residues: D-alanine--D-alanyl carrier protein ligase (512 aa).

152-153 (TS) is a binding site for ATP. D199 serves as a coordination point for D-alanine. 294–299 (NAYGPT) is a binding site for ATP. D-alanine is bound at residue V303. Residues D385, 397–400 (YGGR), and K499 contribute to the ATP site. K499 lines the D-alanine pocket.

The protein belongs to the ATP-dependent AMP-binding enzyme family. DltA subfamily.

It localises to the cytoplasm. It carries out the reaction holo-[D-alanyl-carrier protein] + D-alanine + ATP = D-alanyl-[D-alanyl-carrier protein] + AMP + diphosphate. Its pathway is cell wall biogenesis; lipoteichoic acid biosynthesis. In terms of biological role, catalyzes the first step in the D-alanylation of lipoteichoic acid (LTA), the activation of D-alanine and its transfer onto the D-alanyl carrier protein (Dcp) DltC. In an ATP-dependent two-step reaction, forms a high energy D-alanyl-AMP intermediate, followed by transfer of the D-alanyl residue as a thiol ester to the phosphopantheinyl prosthetic group of the Dcp. D-alanylation of LTA plays an important role in modulating the properties of the cell wall in Gram-positive bacteria, influencing the net charge of the cell wall. In Streptococcus pyogenes serotype M3 (strain SSI-1), this protein is D-alanine--D-alanyl carrier protein ligase.